The chain runs to 1078 residues: mRNA 3'-end-processing protein rna14 (1078 aa).

Disordered regions lie at residues 15–209 (AMNA…DTPA) and 222–251 (QSEN…HDRV). Over residues 42–55 (KTLQDQYSASILDS) the composition is skewed to polar residues. Over residues 58–68 (SEIAPSSASPS) the composition is skewed to low complexity. Residues 82–115 (DPSQPADSAYPSQTPSRADSQASVSAPASGTSVP) show a composition bias toward polar residues. Acidic residues predominate over residues 126–139 (VEDEDEDDAGDADY). Composition is skewed to polar residues over residues 151–170 (NTIS…NEDT) and 190–206 (FPNS…SKSD). 6 HAT repeats span residues 280–312 (NRID…MESE), 314–345 (NELY…YVRR), 356–391 (QSRR…FIRS), 405–438 (QKMD…FEMG), 475–508 (TTLP…WEKG), and 520–552 (AFKA…FCFL). Disordered stretches follow at residues 632-663 (ETFA…ESMK) and 851-950 (PTVV…QGSP). Polar residues predominate over residues 879 to 894 (GTPSSRYPDASVTNSP). Residues 896 to 907 (RPLEDFDDEMNR) show a composition bias toward basic and acidic residues. Polar residues predominate over residues 931–949 (RTQQVISNQTGSQFRSQGS).

It is found in the nucleus. The protein localises to the cytoplasm. In terms of biological role, component of the cleavage factor IA (CFIA) complex, which is involved in the endonucleolytic cleavage during polyadenylation-dependent pre-mRNA 3'-end formation. The polypeptide is mRNA 3'-end-processing protein rna14 (rna14) (Aspergillus oryzae (strain ATCC 42149 / RIB 40) (Yellow koji mold)).